A 335-amino-acid polypeptide reads, in one-letter code: Beta-hexosaminidase (335 aa).

Substrate is bound by residues D60, R68, R133, and 163–164 (KH). H176 serves as the catalytic Proton donor/acceptor. D247 (nucleophile) is an active-site residue.

It belongs to the glycosyl hydrolase 3 family. NagZ subfamily.

It localises to the cytoplasm. The catalysed reaction is Hydrolysis of terminal non-reducing N-acetyl-D-hexosamine residues in N-acetyl-beta-D-hexosaminides.. It functions in the pathway cell wall biogenesis; peptidoglycan recycling. Its function is as follows. Plays a role in peptidoglycan recycling by cleaving the terminal beta-1,4-linked N-acetylglucosamine (GlcNAc) from peptide-linked peptidoglycan fragments, giving rise to free GlcNAc, anhydro-N-acetylmuramic acid and anhydro-N-acetylmuramic acid-linked peptides. The sequence is that of Beta-hexosaminidase from Stenotrophomonas maltophilia (strain K279a).